The primary structure comprises 154 residues: Endoribonuclease YbeY (154 aa).

Zn(2+)-binding residues include His117, His121, and His127.

This sequence belongs to the endoribonuclease YbeY family. It depends on Zn(2+) as a cofactor.

It is found in the cytoplasm. Single strand-specific metallo-endoribonuclease involved in late-stage 70S ribosome quality control and in maturation of the 3' terminus of the 16S rRNA. The sequence is that of Endoribonuclease YbeY from Aromatoleum aromaticum (strain DSM 19018 / LMG 30748 / EbN1) (Azoarcus sp. (strain EbN1)).